A 220-amino-acid polypeptide reads, in one-letter code: MKSYQNEFIKFAVEKRVLRFGDFTLKSGRMSPYFFNSGLFNSGASLARLGRFYAQAISGSGLAFEVLFGPAYKGIPLVTATAIALMEKYGRDIGYAFNRKEVKDHGEGGKVVGTPLKGARVLIVDDVISAGTSVREAATLIHAAGATLAGVAISLDRQEQGQGKQSAVQEVEAQYGIPVVSIACLDHLIRHLEEKPEMKEHLDKMQAYKKQYGVERVFNP.

Position 26 (Lys-26) interacts with 5-phospho-alpha-D-ribose 1-diphosphate. Position 34–35 (34–35 (FF)) interacts with orotate. Residues 72 to 73 (YK), Arg-99, Lys-100, Lys-103, His-105, and 125 to 133 (DDVISAGTS) contribute to the 5-phospho-alpha-D-ribose 1-diphosphate site. Ser-129 and Arg-157 together coordinate orotate.

This sequence belongs to the purine/pyrimidine phosphoribosyltransferase family. PyrE subfamily. Homodimer. Mg(2+) serves as cofactor.

The enzyme catalyses orotidine 5'-phosphate + diphosphate = orotate + 5-phospho-alpha-D-ribose 1-diphosphate. Its pathway is pyrimidine metabolism; UMP biosynthesis via de novo pathway; UMP from orotate: step 1/2. Its function is as follows. Catalyzes the transfer of a ribosyl phosphate group from 5-phosphoribose 1-diphosphate to orotate, leading to the formation of orotidine monophosphate (OMP). This Nitrosococcus oceani (strain ATCC 19707 / BCRC 17464 / JCM 30415 / NCIMB 11848 / C-107) protein is Orotate phosphoribosyltransferase.